The chain runs to 404 residues: Ubiquitin-like modifier-activating enzyme 5 (404 aa).

Residues G83, D104, K127, N150, and N184 each contribute to the ATP site. C226 and C229 together coordinate Zn(2+). The Glycyl thioester intermediate role is filled by C250. Zn(2+)-binding residues include C303 and C308. Residues 372 to 404 (APEKSSETSEETVSAATADETSLEDLMAQMKSM) are disordered. The span at 382–391 (ETVSAATADE) shows a compositional bias: low complexity.

Belongs to the ubiquitin-activating E1 family. UBA5 subfamily. As to quaternary structure, interacts (via C-terminus) with Ufc1. Interacts with Ufm1.

The protein resides in the cytoplasm. Its subcellular location is the nucleus. It localises to the golgi apparatus. Functionally, E1-like enzyme which activates UFM1. This chain is Ubiquitin-like modifier-activating enzyme 5, found in Drosophila melanogaster (Fruit fly).